A 210-amino-acid chain; its full sequence is Guanylate kinase (210 aa).

The Guanylate kinase-like domain maps to 5 to 183 (GILFVISAPS…AVEEFKSIIL (179 aa)). Position 12 to 19 (12 to 19 (APSGAGKT)) interacts with ATP.

This sequence belongs to the guanylate kinase family.

It localises to the cytoplasm. It carries out the reaction GMP + ATP = GDP + ADP. Its function is as follows. Essential for recycling GMP and indirectly, cGMP. The polypeptide is Guanylate kinase (Syntrophotalea carbinolica (strain DSM 2380 / NBRC 103641 / GraBd1) (Pelobacter carbinolicus)).